A 186-amino-acid chain; its full sequence is Small ribosomal subunit protein uS4 (186 aa).

Residues Arg106–Ile170 enclose the S4 RNA-binding domain. A disordered region spans residues Glu151–Glu186. The segment covering Leu163 to Ser178 has biased composition (basic and acidic residues).

This sequence belongs to the universal ribosomal protein uS4 family. Part of the 30S ribosomal subunit. Contacts protein S5. The interaction surface between S4 and S5 is involved in control of translational fidelity.

One of the primary rRNA binding proteins, it binds directly to 16S rRNA where it nucleates assembly of the body of the 30S subunit. Its function is as follows. With S5 and S12 plays an important role in translational accuracy. The sequence is that of Small ribosomal subunit protein uS4 from Methanopyrus kandleri (strain AV19 / DSM 6324 / JCM 9639 / NBRC 100938).